The chain runs to 244 residues: Krueppel-like factor 9 (244 aa).

The tract at residues 80–142 (SVCSDSLESP…AKGKHASEKR (63 aa)) is disordered. Phosphoserine is present on Ser122. 3 C2H2-type zinc fingers span residues 143 to 167 (HKCP…YRVH), 173 to 197 (FPCT…YRTH), and 203 to 225 (FRCP…ARRH).

This sequence belongs to the Sp1 C2H2-type zinc-finger protein family. As to quaternary structure, interacts with ZZEF1. As to expression, epidermis (at protein level).

The protein localises to the nucleus. Its function is as follows. Transcription factor that binds to GC box promoter elements. Selectively activates mRNA synthesis from genes containing tandem repeats of GC boxes but represses genes with a single GC box. Acts as an epidermal circadian transcription factor regulating keratinocyte proliferation. This chain is Krueppel-like factor 9 (KLF9), found in Homo sapiens (Human).